The primary structure comprises 125 residues: MFPTHVLLIVIACVTAFVYGGGGKRPRVCRYSSDGPVCRTNIECSDPEVHCYRKPGHPYGRCCVKRPYACPRGSSNRYDDPEGFPPLVQRCPYAYPFFCRPGYYCRTKTGGSTEFYGVCCPLRVG.

The first 16 residues, 1-16 (MFPTHVLLIVIACVTA), serve as a signal peptide directing secretion.

Post-translationally, weakly glycosylated. Expressed at highest levels in mantle, followed by adductor muscle. Found in the nacreous shell layer (at protein level).

Its subcellular location is the secreted. This Unio pictorum (Painter's mussel) protein is Upsalin.